A 287-amino-acid polypeptide reads, in one-letter code: ATP synthase gamma chain (287 aa).

The protein belongs to the ATPase gamma chain family. In terms of assembly, F-type ATPases have 2 components, CF(1) - the catalytic core - and CF(0) - the membrane proton channel. CF(1) has five subunits: alpha(3), beta(3), gamma(1), delta(1), epsilon(1). CF(0) has three main subunits: a, b and c.

It is found in the cell inner membrane. Produces ATP from ADP in the presence of a proton gradient across the membrane. The gamma chain is believed to be important in regulating ATPase activity and the flow of protons through the CF(0) complex. This is ATP synthase gamma chain from Yersinia pestis.